The primary structure comprises 253 residues: TasA anchoring/assembly protein (253 aa).

An N-terminal signal peptide occupies residues Met-1–Ala-32. The important for TasA fiber formation stretch occupies residues Thr-50 to Thr-57. Residues Glu-190–Ser-241 show a composition bias toward basic and acidic residues. The tract at residues Glu-190–Gln-253 is disordered.

Its subcellular location is the secreted. The protein resides in the cell wall. In terms of biological role, required for biofilm formation. Required for the proper anchoring and polymerization of TasA amyloid fibers at the cell surface. Is also a minor component of TasA fibers. This is TasA anchoring/assembly protein from Bacillus subtilis (strain 168).